Consider the following 433-residue polypeptide: Homoserine dehydrogenase (433 aa).

The NADPH site is built by Thr-13 and Val-14. Residues Val-14 and Val-33 each coordinate NAD(+). An NADP(+)-binding site is contributed by Val-14. Residues Lys-45 and Lys-105 each coordinate NADPH. Residues Lys-45 and Lys-105 each contribute to the NADP(+) site. Residues Glu-129, Val-132, Gly-134, and Ile-136 each coordinate Na(+). NADP(+)-binding residues include Gly-187 and Glu-190. Positions 190 and 201 each coordinate L-homoserine. Catalysis depends on Lys-205, which acts as the Proton donor. Residue Gly-302 participates in NADPH binding. Residue Gly-302 coordinates NAD(+). Gly-302 contributes to the NADP(+) binding site. One can recognise an ACT domain in the interval 350 to 426 (FLRIHVKDEV…VVQEVKSTYR (77 aa)).

The protein belongs to the homoserine dehydrogenase family. In terms of assembly, homotetramer. The cofactor is a metal cation.

It is found in the cytoplasm. It localises to the secreted. It carries out the reaction L-homoserine + NADP(+) = L-aspartate 4-semialdehyde + NADPH + H(+). It functions in the pathway amino-acid biosynthesis; L-methionine biosynthesis via de novo pathway; L-homoserine from L-aspartate: step 3/3. The protein operates within amino-acid biosynthesis; L-threonine biosynthesis; L-threonine from L-aspartate: step 3/5. Its activity is regulated as follows. Feedback inhibition by threonine. Activated by sodium ions. In terms of biological role, catalyzes the conversion of L-aspartate-beta-semialdehyde (L-Asa) to L-homoserine (L-Hse), the third step in the biosynthesis of threonine and methionine from aspartate. Utilizes NADPH but not NADH as coenzyme. The protein is Homoserine dehydrogenase (hom) of Bacillus subtilis (strain 168).